Reading from the N-terminus, the 150-residue chain is 16.9 kDa class I heat shock protein 1 (150 aa).

The interval 1–42 (MSLVRRSNVFDPFSLDLWDPFDSVFRSVVPATSDNDTAAFAN) is important for thermostability under elevated temperature. In terms of domain architecture, sHSP spans 36–150 (DTAAFANARI…PEVKAIEISG (115 aa)).

Belongs to the small heat shock protein (HSP20) family. Forms oligomeric structures.

The protein localises to the cytoplasm. The polypeptide is 16.9 kDa class I heat shock protein 1 (HSP16.9A) (Oryza sativa subsp. japonica (Rice)).